The chain runs to 1099 residues: Glutamine--fructose-6-phosphate aminotransferase [isomerizing] (1099 aa).

Catalysis depends on Cys2, which acts as the Nucleophile; for GATase activity. Residues 2–71 (CGIIGYIGND…DIDGNIGIGH (70 aa)) form the Glutamine amidotransferase type-2; first part domain. The HTH cro/C1-type domain maps to 198–253 (LRKVREKLGLTRKDVEKLCGVKEIYIVKIETGKLESIEEERLKKLCSLYGINFEEI). In terms of domain architecture, DOD-type homing endonuclease spans 278 to 413 (IIGYIIGDGH…IQFLLLRFGI (136 aa)). The region spanning 571 to 723 (SRWATHGNVC…DGDVVVIKKK (153 aa)) is the Glutamine amidotransferase type-2; second part domain. 2 consecutive SIS domains span residues 786–923 (LAKC…LLGR) and 948–1089 (TIKE…VDKP). Catalysis depends on Lys1094, which acts as the For Fru-6P isomerization activity.

It in the C-terminal section; belongs to the SIS family. GFAT subfamily. As to quaternary structure, homodimer. In terms of processing, this protein undergoes a protein self splicing that involves a post-translational excision of the intervening region (intein) followed by peptide ligation.

Its subcellular location is the cytoplasm. It carries out the reaction D-fructose 6-phosphate + L-glutamine = D-glucosamine 6-phosphate + L-glutamate. Catalyzes the first step in hexosamine metabolism, converting fructose-6P into glucosamine-6P using glutamine as a nitrogen source. This Methanocaldococcus jannaschii (strain ATCC 43067 / DSM 2661 / JAL-1 / JCM 10045 / NBRC 100440) (Methanococcus jannaschii) protein is Glutamine--fructose-6-phosphate aminotransferase [isomerizing] (glmS).